Here is a 561-residue protein sequence, read N- to C-terminus: Foot protein 1 variant 1 (561 aa).

An N-terminal signal peptide occupies residues 1–20 (MARNMNILTLFAVLIGSASA). 3',4'-dihydroxyphenylalanine is present on tyrosine 22. A 4-hydroxyproline modification is found at proline 33. Residues 41-50 (VHPPAWTAWK) form an A-1; approximate repeat. A 13 X 10 AA A-P-P-P-A-W-T-A-W-K region spans residues 41-410 (VHPPAWTAWK…APPPAWTAWK (370 aa)). Tryptophan 46, tryptophan 49, tryptophan 56, and tryptophan 59 each carry 7'-hydroxytryptophan. Residues tryptophan 46, tryptophan 49, tryptophan 56, and tryptophan 59 are each glycosylated (C-linked (Man) hydroxytryptophan). The A-2; approximate repeat unit spans residues 51-60 (AHPPAWTAWK). The stretch at 61-70 (ATPKPWTAWK) is one B-1 repeat. The tract at residues 61–440 (ATPKPWTAWK…ATPKPWTAWR (380 aa)) is 27 X 10 AA A-T-P-K-P-W-T-A-W-K. Proline 65 is modified (4-hydroxyproline). Tryptophan 66 carries a C-linked (Man) tryptophan glycan. Tryptophan 69 carries the 7'-hydroxytryptophan modification. A glycan (C-linked (Man) hydroxytryptophan) is linked at tryptophan 69. The stretch at 71–80 (APPPAWTAWK) is one A-3 repeat. A 4-hydroxyproline mark is found at proline 72, proline 73, and proline 74. 7'-hydroxytryptophan occurs at positions 76 and 79. 2 C-linked (Man) hydroxytryptophan glycosylation sites follow: tryptophan 76 and tryptophan 79. A B-2 repeat occupies 81–90 (ATPKPWTAWK). Proline 85 carries the post-translational modification 4-hydroxyproline. A glycan (C-linked (Man) tryptophan) is linked at tryptophan 86. 7'-hydroxytryptophan is present on tryptophan 89. Residue tryptophan 89 is glycosylated (C-linked (Man) hydroxytryptophan). Residues 91–100 (APPPTWTAWK) form an A-4; approximate repeat. 4-hydroxyproline occurs at positions 92, 93, and 94. 7'-hydroxytryptophan occurs at positions 96 and 99. Tryptophan 96 and tryptophan 99 each carry a C-linked (Man) hydroxytryptophan glycan. The B-3 repeat unit spans residues 101–110 (ATPKPWTAWK). Proline 105 carries the 4-hydroxyproline modification. A glycan (C-linked (Man) tryptophan) is linked at tryptophan 106. Tryptophan 109 is modified (7'-hydroxytryptophan). A glycan (C-linked (Man) hydroxytryptophan) is linked at tryptophan 109. Residues 111–120 (APPPAWTAWK) form an A-5 repeat. Residues proline 112, proline 113, and proline 114 each carry the 4-hydroxyproline modification. Residues tryptophan 116 and tryptophan 119 each carry the 7'-hydroxytryptophan modification. C-linked (Man) hydroxytryptophan glycosylation is found at tryptophan 116 and tryptophan 119. The B-4; approximate repeat unit spans residues 121–130 (ATLKPWTAWK). Proline 125 carries the 4-hydroxyproline modification. C-linked (Man) tryptophan glycosylation is present at tryptophan 126. At tryptophan 129 the chain carries 7'-hydroxytryptophan. C-linked (Man) hydroxytryptophan glycosylation occurs at tryptophan 129. One copy of the B-5 repeat lies at 131–140 (ATPKPWTAWK). Proline 135 bears the 4-hydroxyproline mark. Tryptophan 136 is a glycosylation site (C-linked (Man) tryptophan). The residue at position 139 (tryptophan 139) is a 7'-hydroxytryptophan. Tryptophan 139 carries C-linked (Man) hydroxytryptophan glycosylation. The B-6 repeat unit spans residues 141-150 (ATPKPWTAWK). Proline 145 is subject to 4-hydroxyproline. C-linked (Man) tryptophan glycosylation is present at tryptophan 146. Tryptophan 149 carries the 7'-hydroxytryptophan modification. The C-linked (Man) hydroxytryptophan glycan is linked to tryptophan 149. A B-7 repeat occupies 151–160 (ATPKPWTAWK). Position 155 is a 4-hydroxyproline (proline 155). C-linked (Man) tryptophan glycosylation is present at tryptophan 156. Tryptophan 159 bears the 7'-hydroxytryptophan mark. Residue tryptophan 159 is glycosylated (C-linked (Man) hydroxytryptophan). Residues 161–170 (ATPKPWTAWK) form a B-8 repeat. At proline 165 the chain carries 4-hydroxyproline. Tryptophan 166 carries C-linked (Man) tryptophan glycosylation. 7'-hydroxytryptophan is present on tryptophan 169. Tryptophan 169 is a glycosylation site (C-linked (Man) hydroxytryptophan). The B-9; approximate repeat unit spans residues 171-180 (ATPKPWTVWK). Proline 175 is subject to 4-hydroxyproline. Tryptophan 176 carries C-linked (Man) tryptophan glycosylation. Tryptophan 179 bears the 7'-hydroxytryptophan mark. C-linked (Man) hydroxytryptophan glycosylation is present at tryptophan 179. Residues 181–190 (ATPKPWTAWK) form a B-10 repeat. Proline 185 is modified (4-hydroxyproline). A C-linked (Man) tryptophan glycan is attached at tryptophan 186. Residue tryptophan 189 is modified to 7'-hydroxytryptophan. Tryptophan 189 carries C-linked (Man) hydroxytryptophan glycosylation. The stretch at 191–200 (ATPKPWTAWK) is one B-11 repeat. Proline 195 carries the 4-hydroxyproline modification. Tryptophan 196 carries a C-linked (Man) tryptophan glycan. Tryptophan 199 is modified (7'-hydroxytryptophan). Residue tryptophan 199 is glycosylated (C-linked (Man) hydroxytryptophan). One copy of the A-6; approximate repeat lies at 201–210 (APPPAWSAWK). Proline 202, proline 203, and proline 204 each carry 4-hydroxyproline. 2 positions are modified to 7'-hydroxytryptophan: tryptophan 206 and tryptophan 209. Residues tryptophan 206 and tryptophan 209 are each glycosylated (C-linked (Man) hydroxytryptophan). One copy of the B-12; approximate repeat lies at 211 to 220 (ATPKPWTVWK). Proline 215 carries the post-translational modification 4-hydroxyproline. A glycan (C-linked (Man) tryptophan) is linked at tryptophan 216. Tryptophan 219 is subject to 7'-hydroxytryptophan. A C-linked (Man) hydroxytryptophan glycan is attached at tryptophan 219. The B-13 repeat unit spans residues 221–230 (ATPKPWTAWK). At proline 225 the chain carries 4-hydroxyproline. The C-linked (Man) tryptophan glycan is linked to tryptophan 226. Tryptophan 229 carries the 7'-hydroxytryptophan modification. A C-linked (Man) hydroxytryptophan glycan is attached at tryptophan 229. One copy of the B-14 repeat lies at 231 to 240 (ATPKPWTAWK). At proline 235 the chain carries 4-hydroxyproline. C-linked (Man) tryptophan glycosylation occurs at tryptophan 236. Tryptophan 239 carries the post-translational modification 7'-hydroxytryptophan. Residue tryptophan 239 is glycosylated (C-linked (Man) hydroxytryptophan). Residues 241–250 (ATPKPWTVWK) form a B-15; approximate repeat. Residue proline 245 is modified to 4-hydroxyproline. C-linked (Man) tryptophan glycosylation occurs at tryptophan 246. Position 249 is a 7'-hydroxytryptophan (tryptophan 249). Tryptophan 249 carries a C-linked (Man) hydroxytryptophan glycan. One copy of the B-16 repeat lies at 251 to 260 (ATPKPWTAWK). Proline 255 carries the post-translational modification 4-hydroxyproline. The C-linked (Man) tryptophan glycan is linked to tryptophan 256. Tryptophan 259 bears the 7'-hydroxytryptophan mark. C-linked (Man) hydroxytryptophan glycosylation occurs at tryptophan 259. An A-7 repeat occupies 261–270 (APPPAWTAWK). A 4-hydroxyproline mark is found at proline 262, proline 263, and proline 264. A 7'-hydroxytryptophan mark is found at tryptophan 266 and tryptophan 269. Tryptophan 266 and tryptophan 269 each carry a C-linked (Man) hydroxytryptophan glycan. The B-17 repeat unit spans residues 271–280 (ATPKPWTAWK). Position 275 is a 4-hydroxyproline (proline 275). C-linked (Man) tryptophan glycosylation occurs at tryptophan 276. A 7'-hydroxytryptophan modification is found at tryptophan 279. The C-linked (Man) hydroxytryptophan glycan is linked to tryptophan 279. The stretch at 281–290 (APPPTWTAWK) is one A-8; approximate repeat. A 4-hydroxyproline mark is found at proline 282, proline 283, and proline 284. Tryptophan 286 and tryptophan 289 each carry 7'-hydroxytryptophan. C-linked (Man) hydroxytryptophan glycans are attached at residues tryptophan 286 and tryptophan 289. One copy of the B-18 repeat lies at 291 to 300 (ATPKPWTAWK). Proline 295 carries the post-translational modification 4-hydroxyproline. C-linked (Man) tryptophan glycosylation is present at tryptophan 296. Tryptophan 299 carries the post-translational modification 7'-hydroxytryptophan. C-linked (Man) hydroxytryptophan glycosylation is present at tryptophan 299. The A-9; approximate repeat unit spans residues 301–310 (APPPAWSAWK). A 4-hydroxyproline mark is found at proline 302, proline 303, and proline 304. A 7'-hydroxytryptophan mark is found at tryptophan 306 and tryptophan 309. C-linked (Man) hydroxytryptophan glycosylation is found at tryptophan 306 and tryptophan 309. One copy of the B-19 repeat lies at 311–320 (ATPKPWTAWK). Proline 315 bears the 4-hydroxyproline mark. A C-linked (Man) tryptophan glycan is attached at tryptophan 316. Tryptophan 319 bears the 7'-hydroxytryptophan mark. The C-linked (Man) hydroxytryptophan glycan is linked to tryptophan 319. One copy of the B-20 repeat lies at 321–330 (ATPKPWTAWK). Position 325 is a 4-hydroxyproline (proline 325). C-linked (Man) tryptophan glycosylation occurs at tryptophan 326. Position 329 is a 7'-hydroxytryptophan (tryptophan 329). Tryptophan 329 is a glycosylation site (C-linked (Man) hydroxytryptophan). The B-21 repeat unit spans residues 331-340 (ATPKPWTAWK). A 4-hydroxyproline modification is found at proline 335. Tryptophan 336 is a glycosylation site (C-linked (Man) tryptophan). Tryptophan 339 is subject to 7'-hydroxytryptophan. C-linked (Man) hydroxytryptophan glycosylation is present at tryptophan 339. The B-22 repeat unit spans residues 341-350 (ATPKPWTAWK). Proline 345 carries the 4-hydroxyproline modification. Tryptophan 346 is a glycosylation site (C-linked (Man) tryptophan). 7'-hydroxytryptophan is present on tryptophan 349. Tryptophan 349 carries a C-linked (Man) hydroxytryptophan glycan. The A-10; approximate repeat unit spans residues 351–360 (VPPPAWTAWK). 4-hydroxyproline is present on residues proline 352, proline 353, and proline 354. Residues tryptophan 356, tryptophan 359, tryptophan 366, and tryptophan 369 each carry the 7'-hydroxytryptophan modification. C-linked (Man) hydroxytryptophan glycans are attached at residues tryptophan 356, tryptophan 359, tryptophan 366, and tryptophan 369. One copy of the A-11; approximate repeat lies at 361–370 (AHPPAWTAWK). Residues 371–380 (ATPKPWTAWK) form a B-23 repeat. Position 375 is a 4-hydroxyproline (proline 375). The C-linked (Man) tryptophan glycan is linked to tryptophan 376. Tryptophan 379 bears the 7'-hydroxytryptophan mark. C-linked (Man) hydroxytryptophan glycosylation occurs at tryptophan 379. Residues 381–390 (APPPAWTAWK) form an A-12 repeat. 4-hydroxyproline is present on residues proline 382, proline 383, and proline 384. 7'-hydroxytryptophan occurs at positions 386 and 389. Tryptophan 386 and tryptophan 389 each carry a C-linked (Man) hydroxytryptophan glycan. Residues 391–400 (ATPKPWTAWK) form a B-24 repeat. Proline 395 is modified (4-hydroxyproline). A glycan (C-linked (Man) tryptophan) is linked at tryptophan 396. Tryptophan 399 bears the 7'-hydroxytryptophan mark. A C-linked (Man) hydroxytryptophan glycan is attached at tryptophan 399. An A-13 repeat occupies 401–410 (APPPAWTAWK). 4-hydroxyproline occurs at positions 402, 403, and 404. Residues tryptophan 406 and tryptophan 409 each carry the 7'-hydroxytryptophan modification. C-linked (Man) hydroxytryptophan glycans are attached at residues tryptophan 406 and tryptophan 409. The stretch at 411–420 (ATPKPWTAWK) is one B-25 repeat. At proline 415 the chain carries 4-hydroxyproline. C-linked (Man) tryptophan glycosylation occurs at tryptophan 416. A 7'-hydroxytryptophan modification is found at tryptophan 419. Tryptophan 419 carries C-linked (Man) hydroxytryptophan glycosylation. Residues 421-430 (ATPKPWTVWK) form a B-26; approximate repeat. Proline 425 carries the 4-hydroxyproline modification. Tryptophan 426 carries a C-linked (Man) tryptophan glycan. The residue at position 429 (tryptophan 429) is a 7'-hydroxytryptophan. Tryptophan 429 carries C-linked (Man) hydroxytryptophan glycosylation. The B-27; approximate repeat unit spans residues 431-440 (ATPKPWTAWR). Proline 435 is modified (4-hydroxyproline). A glycan (C-linked (Man) tryptophan) is linked at tryptophan 436. Tryptophan 439 bears the 7'-hydroxytryptophan mark. Tryptophan 439 is a glycosylation site (C-linked (Man) hydroxytryptophan). A disordered region spans residues 452–507 (GHGYGGYGKPGKPGKPGSKGPRGPAGPPGATGKTGRTGATGKRGPPGYPGKPGVPG). The segment covering 453 to 462 (HGYGGYGKPG) has biased composition (gly residues). In terms of domain architecture, Collagen-like spans 459 to 510 (GKPGKPGKPGSKGPRGPAGPPGATGKTGRTGATGKRGPPGYPGKPGVPGRNG). Low complexity predominate over residues 466–496 (KPGSKGPRGPAGPPGATGKTGRTGATGKRGP). Proline 497, proline 500, and proline 506 each carry 4-hydroxyproline.

As to expression, produced by the byssal gland.

The protein localises to the secreted. Functionally, provides adhesiveness to the mussel's foot. Mussels produce one of the strongest water insoluble glues. The mussel's adhesive is a bundle of threads, called a byssus, formed by a fibrous collagenous core coated with adhesive proteins. In Perna viridis (Asian green mussel), this protein is Foot protein 1 variant 1.